The sequence spans 234 residues: Leucyl/phenylalanyl-tRNA--protein transferase (234 aa).

This sequence belongs to the L/F-transferase family.

It is found in the cytoplasm. The enzyme catalyses N-terminal L-lysyl-[protein] + L-leucyl-tRNA(Leu) = N-terminal L-leucyl-L-lysyl-[protein] + tRNA(Leu) + H(+). It catalyses the reaction N-terminal L-arginyl-[protein] + L-leucyl-tRNA(Leu) = N-terminal L-leucyl-L-arginyl-[protein] + tRNA(Leu) + H(+). The catalysed reaction is L-phenylalanyl-tRNA(Phe) + an N-terminal L-alpha-aminoacyl-[protein] = an N-terminal L-phenylalanyl-L-alpha-aminoacyl-[protein] + tRNA(Phe). Functionally, functions in the N-end rule pathway of protein degradation where it conjugates Leu, Phe and, less efficiently, Met from aminoacyl-tRNAs to the N-termini of proteins containing an N-terminal arginine or lysine. This Nitrosomonas eutropha (strain DSM 101675 / C91 / Nm57) protein is Leucyl/phenylalanyl-tRNA--protein transferase.